The sequence spans 196 residues: Small ribosomal subunit protein uS4c (196 aa).

The tract at residues 16–36 (GTLPGLTSKRPKSGSDLKTQL) is disordered. Positions 89–150 (MRLDNILFRL…KQRSKALIQN (62 aa)) constitute an S4 RNA-binding domain.

This sequence belongs to the universal ribosomal protein uS4 family. In terms of assembly, part of the 30S ribosomal subunit. Contacts protein S5. The interaction surface between S4 and S5 is involved in control of translational fidelity.

The protein resides in the plastid. It is found in the chloroplast. One of the primary rRNA binding proteins, it binds directly to 16S rRNA where it nucleates assembly of the body of the 30S subunit. Functionally, with S5 and S12 plays an important role in translational accuracy. This Rhapis humilis (Slender lady palm) protein is Small ribosomal subunit protein uS4c (rps4).